We begin with the raw amino-acid sequence, 780 residues long: Exocyst complex component 3-like protein (780 aa).

It belongs to the SEC6 family.

The protein resides in the cytoplasmic vesicle. The protein localises to the secretory vesicle. Its function is as follows. As part of the exocyst, may play a role in regulated exocytosis. The chain is Exocyst complex component 3-like protein (exoc3l1) from Danio rerio (Zebrafish).